The primary structure comprises 123 residues: Small ribosomal subunit protein uS12c (123 aa).

This sequence belongs to the universal ribosomal protein uS12 family. As to quaternary structure, part of the 30S ribosomal subunit.

The protein localises to the plastid. It localises to the chloroplast. With S4 and S5 plays an important role in translational accuracy. Located at the interface of the 30S and 50S subunits. This chain is Small ribosomal subunit protein uS12c (rps12), found in Chara vulgaris (Common stonewort).